The sequence spans 225 residues: ATP-dependent Clp protease proteolytic subunit (225 aa).

Ser-123 acts as the Nucleophile in catalysis. Residue His-148 is part of the active site.

This sequence belongs to the peptidase S14 family. In terms of assembly, fourteen ClpP subunits assemble into 2 heptameric rings which stack back to back to give a disk-like structure with a central cavity, resembling the structure of eukaryotic proteasomes.

Its subcellular location is the cytoplasm. It carries out the reaction Hydrolysis of proteins to small peptides in the presence of ATP and magnesium. alpha-casein is the usual test substrate. In the absence of ATP, only oligopeptides shorter than five residues are hydrolyzed (such as succinyl-Leu-Tyr-|-NHMec, and Leu-Tyr-Leu-|-Tyr-Trp, in which cleavage of the -Tyr-|-Leu- and -Tyr-|-Trp bonds also occurs).. In terms of biological role, cleaves peptides in various proteins in a process that requires ATP hydrolysis. Has a chymotrypsin-like activity. Plays a major role in the degradation of misfolded proteins. This is ATP-dependent Clp protease proteolytic subunit from Chlorobaculum tepidum (strain ATCC 49652 / DSM 12025 / NBRC 103806 / TLS) (Chlorobium tepidum).